The primary structure comprises 274 residues: Bis(5'-nucleosyl)-tetraphosphatase, symmetrical (274 aa).

The protein belongs to the Ap4A hydrolase family.

It catalyses the reaction P(1),P(4)-bis(5'-adenosyl) tetraphosphate + H2O = 2 ADP + 2 H(+). Hydrolyzes diadenosine 5',5'''-P1,P4-tetraphosphate to yield ADP. The chain is Bis(5'-nucleosyl)-tetraphosphatase, symmetrical from Buchnera aphidicola subsp. Acyrthosiphon pisum (strain Tuc7).